A 209-amino-acid polypeptide reads, in one-letter code: Bacteriorhodopsin (209 aa).

A helical membrane pass occupies residues L1–A17. The Cytoplasmic portion of the chain corresponds to R18–Y31. A helical membrane pass occupies residues I32–L50. Residues G51–I66 lie on the Extracellular side of the membrane. Residues Y67 to D84 form a helical membrane-spanning segment. Topologically, residues L85–T95 are cytoplasmic. The helical transmembrane segment at I96–L115 threads the bilayer. The Extracellular portion of the chain corresponds to S116–R128. The chain crosses the membrane as a helical span at residues L129–S148. Residues S149 to K166 lie on the Cytoplasmic side of the membrane. A helical membrane pass occupies residues T167–V185. Topologically, residues G186 to I197 are extracellular. Residues E198–A209 form a helical membrane-spanning segment.

Belongs to the archaeal/bacterial/fungal opsin family.

The protein localises to the cell membrane. Its function is as follows. Light-driven proton pump. This is Bacteriorhodopsin (bop) from Halobacterium halobium (strain shark).